Reading from the N-terminus, the 278-residue chain is Ribosomal RNA small subunit methyltransferase A (278 aa).

Asn27, Leu29, Gly54, Glu75, Asp95, and Asn118 together coordinate S-adenosyl-L-methionine.

The protein belongs to the class I-like SAM-binding methyltransferase superfamily. rRNA adenine N(6)-methyltransferase family. RsmA subfamily.

The protein localises to the cytoplasm. It carries out the reaction adenosine(1518)/adenosine(1519) in 16S rRNA + 4 S-adenosyl-L-methionine = N(6)-dimethyladenosine(1518)/N(6)-dimethyladenosine(1519) in 16S rRNA + 4 S-adenosyl-L-homocysteine + 4 H(+). Its function is as follows. Specifically dimethylates two adjacent adenosines (A1518 and A1519) in the loop of a conserved hairpin near the 3'-end of 16S rRNA in the 30S particle. May play a critical role in biogenesis of 30S subunits. This is Ribosomal RNA small subunit methyltransferase A from Chlamydia abortus (strain DSM 27085 / S26/3) (Chlamydophila abortus).